The primary structure comprises 139 residues: D-ribose pyranase (139 aa).

His-20 functions as the Proton donor in the catalytic mechanism. Residues Asp-28, His-106, and Phe-128–Asn-130 each bind substrate.

Belongs to the RbsD / FucU family. RbsD subfamily. Homodecamer.

It localises to the cytoplasm. It carries out the reaction beta-D-ribopyranose = beta-D-ribofuranose. It participates in carbohydrate metabolism; D-ribose degradation; D-ribose 5-phosphate from beta-D-ribopyranose: step 1/2. Functionally, catalyzes the interconversion of beta-pyran and beta-furan forms of D-ribose. This chain is D-ribose pyranase, found in Yersinia enterocolitica serotype O:8 / biotype 1B (strain NCTC 13174 / 8081).